We begin with the raw amino-acid sequence, 137 residues long: Large ribosomal subunit protein uL16 (137 aa).

The protein belongs to the universal ribosomal protein uL16 family. Part of the 50S ribosomal subunit.

In terms of biological role, binds 23S rRNA and is also seen to make contacts with the A and possibly P site tRNAs. This chain is Large ribosomal subunit protein uL16, found in Brucella abortus (strain S19).